The following is a 327-amino-acid chain: DNA-directed RNA polymerase subunit alpha (327 aa).

The interval 1 to 233 is alpha N-terminal domain (alpha-NTD); sequence MVREKVKVST…NLFIPFLHVE (233 aa). The segment at 267–327 is alpha C-terminal domain (alpha-CTD); that stretch reads LAFQYIFIDQ…KKILDILEKK (61 aa).

The protein belongs to the RNA polymerase alpha chain family. As to quaternary structure, in plastids the minimal PEP RNA polymerase catalytic core is composed of four subunits: alpha, beta, beta', and beta''. When a (nuclear-encoded) sigma factor is associated with the core the holoenzyme is formed, which can initiate transcription.

Its subcellular location is the plastid. The protein localises to the chloroplast. It catalyses the reaction RNA(n) + a ribonucleoside 5'-triphosphate = RNA(n+1) + diphosphate. Its function is as follows. DNA-dependent RNA polymerase catalyzes the transcription of DNA into RNA using the four ribonucleoside triphosphates as substrates. The chain is DNA-directed RNA polymerase subunit alpha from Lepidium virginicum (Virginia pepperweed).